A 101-amino-acid chain; its full sequence is MIGLEHYLTVAATLFVIGIFGLFLNRKNVIVLLMSIELMLLAVNINLVAFSSFLGDLVGQVFTLFVLTVAAAEAAIGLAILVCFFRNRGTIDVEDVNVMKG.

3 consecutive transmembrane segments (helical) span residues 4–24 (LEHY…GLFL), 30–50 (IVLL…LVAF), and 65–85 (FVLT…VCFF).

Belongs to the complex I subunit 4L family. As to quaternary structure, NDH-1 is composed of 14 different subunits. Subunits NuoA, H, J, K, L, M, N constitute the membrane sector of the complex.

It is found in the cell inner membrane. The catalysed reaction is a quinone + NADH + 5 H(+)(in) = a quinol + NAD(+) + 4 H(+)(out). NDH-1 shuttles electrons from NADH, via FMN and iron-sulfur (Fe-S) centers, to quinones in the respiratory chain. The immediate electron acceptor for the enzyme in this species is believed to be ubiquinone. Couples the redox reaction to proton translocation (for every two electrons transferred, four hydrogen ions are translocated across the cytoplasmic membrane), and thus conserves the redox energy in a proton gradient. This chain is NADH-quinone oxidoreductase subunit K, found in Ruegeria pomeroyi (strain ATCC 700808 / DSM 15171 / DSS-3) (Silicibacter pomeroyi).